We begin with the raw amino-acid sequence, 250 residues long: MSQIDENIRYGGAANETDGEDAQRKAQEREAKKAEVRKRLEEAGQKKQKKGFLTPERKKKLRKLLMNKAAEDLKTQQLRKEQERVKVLAERTVALPNVDSIDDHAKLEAIYNDLFSRLCNLEEEKYDINHITTETETTINQLNIEVNDLRGKFVKPSLKKVSKYDNKFKKMAEAKKEDGSKNLRNNLKTVKKESVFTQIANKKKSDKPEWSKKKEEKKEESAPEPVIEPVEEEETAASEGEEEEEEADEE.

Disordered stretches follow at residues 1-59 (MSQI…ERKK) and 194-250 (SVFT…ADEE). Basic and acidic residues-rich tracts occupy residues 21–45 (DAQRKAQEREAKKAEVRKRLEEAGQ) and 206–221 (DKPEWSKKKEEKKEES). The segment covering 229-250 (PVEEEETAASEGEEEEEEADEE) has biased composition (acidic residues).

The protein belongs to the troponin I family. Strongly expressed in body wall muscle during embryogenesis, reduces during the larval stages to adult. In late-stage larvae and adults, expression is evident in the proximal gonad of both hermaphrodites and males.

Its function is as follows. Troponin I is the inhibitory subunit of troponin, the thin filament regulatory complex which confers calcium-sensitivity to muscle actomyosin ATPase activity. The chain is Troponin I 1 (tni-1) from Caenorhabditis elegans.